The chain runs to 55 residues: Large ribosomal subunit protein bL32 (55 aa).

The segment covering 1-19 has biased composition (basic residues); the sequence is MAVPKRRMSRANTHTRRSQ. Residues 1 to 21 form a disordered region; that stretch reads MAVPKRRMSRANTHTRRSQWK.

This sequence belongs to the bacterial ribosomal protein bL32 family.

The polypeptide is Large ribosomal subunit protein bL32 (Corynebacterium kroppenstedtii (strain DSM 44385 / JCM 11950 / CIP 105744 / CCUG 35717)).